The primary structure comprises 776 residues: Palmitoyltransferase AKR1 (776 aa).

Topologically, residues 1–311 (MDQEMTTVAS…MEGKLGPRNT (311 aa)) are cytoplasmic. Residues 38–58 (RLDEGSSIRGGELERDSQEVG) are disordered. ANK repeat units follow at residues 68–97 (CHDL…SLNL), 103–132 (QDVT…DIDA), 137–166 (LKAT…DPNI), 170–199 (QGFN…AIDE), 203–232 (DGHT…SVNS), and 236–265 (AGMT…SLDA). Residues 312–332 (ILAIFLLPIAVLWLIFSTFKW) form a helical membrane-spanning segment. Residues 333–336 (LPVY) lie on the Lumenal side of the membrane. The helical transmembrane segment at 337–357 (VGVPFAIAEFMGMQYTVVLVL) threads the bilayer. The Cytoplasmic portion of the chain corresponds to 358–368 (LGHIKAQDKVS). Residues 369-389 (TSNYFASIITASLIWVGYCWI) traverse the membrane as a helical segment. The Lumenal portion of the chain corresponds to 390 to 402 (SRFAVNTPGYAFS). Residues 403 to 423 (NLGFIIMFVGCCWTFWTAIVT) traverse the membrane as a helical segment. The Cytoplasmic segment spans residues 424-498 (DPGFVPKGQQ…NCVGAKNHRS (75 aa)). Residues 454–504 (NFCIVCMARKPLRSKHCRTCNRCVARFDHHCPWIWNCVGAKNHRSFLLFVL) form the DHHC domain. The S-palmitoyl cysteine intermediate role is filled by Cys-484. A helical membrane pass occupies residues 499 to 519 (FLLFVLFLIGGIILFIRLTIA). Topologically, residues 520–553 (YIQQNAPEYIPTPNPGLTTCDISTTLCQAGDFDP) are lumenal. A helical membrane pass occupies residues 554–574 (FLLCMALWSTLQLTWTSVLAI). Over 575-776 (SHLWQVSRQM…RYEVVSEQEV (202 aa)) the chain is Cytoplasmic. A disordered region spans residues 628–665 (GAGEEAAGPPGAEAGPEGNALLPPPGGHVHGPQCRHGD). Residues 629–645 (AGEEAAGPPGAEAGPEG) are compositionally biased toward low complexity.

It belongs to the DHHC palmitoyltransferase family. AKR/ZDHHC17 subfamily.

It localises to the early endosome membrane. Its subcellular location is the golgi apparatus membrane. It carries out the reaction L-cysteinyl-[protein] + hexadecanoyl-CoA = S-hexadecanoyl-L-cysteinyl-[protein] + CoA. In terms of biological role, palmitoyltransferase specific for casein kinase 1. The sequence is that of Palmitoyltransferase AKR1 (AKR1) from Cryptococcus neoformans var. neoformans serotype D (strain B-3501A) (Filobasidiella neoformans).